The sequence spans 514 residues: Putative selenium-binding protein (514 aa).

It belongs to the selenium-binding protein family.

This chain is Putative selenium-binding protein, found in Caenorhabditis briggsae.